A 1531-amino-acid polypeptide reads, in one-letter code: Myosin-17 (1531 aa).

In terms of domain architecture, Myosin N-terminal SH3-like spans 8–57; it reads IVGSHVWIEDPGAAWIDGEVVKINGEEVHAHTTNGKTVVANIANVFPKDT. Residues 62–732 enclose the Myosin motor domain; that stretch reads GGVDDMTKLS…QMAELDARRA (671 aa). ATP contacts are provided by residues 156–163 and 209–217; these read GESGAGKT and NNNSSRFGK. 4 actin-binding regions span residues 495 to 529, 531 to 554, 589 to 613, and 613 to 635; these read LIEK…YQTF, NYKR…AGEV, FPRL…KLQL, and LQSL…KPNN. 5 IQ domains span residues 758-787, 783-812, 806-835, 831-860, and 854-883; these read LRGA…QAAA, RQAA…STIT, IRHS…MKAA, QMKA…AALS, and LQKA…AARD. The stretch at 884–1056 forms a coiled coil; that stretch reads TGALREAKDK…VLRQQALAIS (173 aa). Residues 1071-1090 are disordered; the sequence is LPRTPENGNYLNGGTKTTPD. Residues 1076–1090 show a composition bias toward polar residues; it reads ENGNYLNGGTKTTPD. The region spanning 1159–1470 is the Dilute domain; the sequence is DRIIQTIATA…IANMRVMMTE (312 aa). The residue at position 1517 (Ser1517) is a Phosphoserine.

This sequence belongs to the TRAFAC class myosin-kinesin ATPase superfamily. Myosin family. Plant myosin class XI subfamily. Homodimer. Interacts with MYOB1, MYOB2 and MYOB3. Interacts with PHOX1 and PHOX2. As to expression, expressed ubiquitously.

Its subcellular location is the cytoplasm. Its function is as follows. Myosin heavy chain that is required for the cell cycle-regulated transport of various organelles and proteins for their segregation. Functions by binding with its tail domain to receptor proteins on organelles and exerting force with its N-terminal motor domain against actin filaments, thereby transporting its cargo along polarized actin cables. Involved in the tip growth of root hair cells and in the elongation of trichome stalk and branches. Plays a major role in trafficking of Golgi stacks, mitochondria and peroxisomes during root hair development. Acts as the primary contributor to ER streaming with a major role in the movement of Golgi bodies. Required for development of pavement cells, trichomes, and stigmatic papillae. Together with XI-F, required for the regulation of organ bending, such as gravitropic root bending. In Arabidopsis thaliana (Mouse-ear cress), this protein is Myosin-17.